The primary structure comprises 250 residues: Coproheme decarboxylase (250 aa).

Fe-coproporphyrin III is bound by residues arginine 131, 145 to 149 (YPMNK), histidine 172, and glutamine 185. Tyrosine 145 is an active-site residue.

Belongs to the ChdC family. Type 1 subfamily. The cofactor is Fe-coproporphyrin III.

The enzyme catalyses Fe-coproporphyrin III + 2 H2O2 + 2 H(+) = heme b + 2 CO2 + 4 H2O. The catalysed reaction is Fe-coproporphyrin III + H2O2 + H(+) = harderoheme III + CO2 + 2 H2O. It catalyses the reaction harderoheme III + H2O2 + H(+) = heme b + CO2 + 2 H2O. It participates in porphyrin-containing compound metabolism; protoheme biosynthesis. Functionally, involved in coproporphyrin-dependent heme b biosynthesis. Catalyzes the decarboxylation of Fe-coproporphyrin III (coproheme) to heme b (protoheme IX), the last step of the pathway. The reaction occurs in a stepwise manner with a three-propionate intermediate. The chain is Coproheme decarboxylase from Staphylococcus aureus (strain MSSA476).